The following is a 228-amino-acid chain: Large ribosomal subunit protein mL64 (228 aa).

Disordered stretches follow at residues 20–44 (PRSRSYHAPPPPRRRPAPHWPDREN) and 186–228 (QRKR…KPSS). Residues 98–207 (TMQESLRVQQ…KKEARIAAMA (110 aa)) adopt a coiled-coil conformation. Positions 184–200 (KQQRKRLKEERQRQKKE) match the Nuclear localization signal motif. Residues 186 to 202 (QRKRLKEERQRQKKEAR) show a composition bias toward basic and acidic residues. Low complexity predominate over residues 212-228 (QDSAEAQDSAASGKPSS).

This sequence belongs to the mitochondrion-specific ribosomal protein mL64 family. As to quaternary structure, component of the mitochondrial ribosome large subunit (39S) which comprises a 16S rRNA and about 50 distinct proteins. Interacts with GADD45A, GADD45B and GADD45G. Interacts with NR4A1 via the NR4A1 AB domain. Interacts with ATAD3A and ATAD3B.

Its subcellular location is the mitochondrion. The protein resides in the nucleus. In terms of biological role, acts as a negative regulator of G1 to S cell cycle phase progression by inhibiting cyclin-dependent kinases. Inhibitory effects are additive with GADD45 proteins but also occur in the absence of GADD45 proteins. Acts as a repressor of the orphan nuclear receptor NR4A1 by inhibiting AB domain-mediated transcriptional activity. May be involved in the hormone-mediated regulation of NR4A1 transcriptional activity. May play a role in mitochondrial protein synthesis. In Rattus norvegicus (Rat), this protein is Large ribosomal subunit protein mL64 (Gadd45gip1).